A 347-amino-acid polypeptide reads, in one-letter code: uncharacterized protein (347 aa).

The N-terminal stretch at 1-21 is a signal peptide; sequence MNKKSLNIVVMFGILMILAFS.

It belongs to the bacterial solute-binding protein 1 family. WtpA subfamily.

This is an uncharacterized protein from Methanococcus maripaludis (strain C5 / ATCC BAA-1333).